The following is a 356-amino-acid chain: D-alanine--D-alanine ligase (356 aa).

Residues 134–339 (KQLFAHRGLP…YADLITKLIE (206 aa)) enclose the ATP-grasp domain. An ATP-binding site is contributed by 167-222 (KDKLEFPVFVKPANLGSSVGISKCNNEEELKSGIEEAFQFDRKLVIEQGIEAREIE). Positions 293, 306, and 308 each coordinate Mg(2+).

The protein belongs to the D-alanine--D-alanine ligase family. It depends on Mg(2+) as a cofactor. The cofactor is Mn(2+).

It is found in the cytoplasm. It carries out the reaction 2 D-alanine + ATP = D-alanyl-D-alanine + ADP + phosphate + H(+). The protein operates within cell wall biogenesis; peptidoglycan biosynthesis. In terms of biological role, cell wall formation. The protein is D-alanine--D-alanine ligase of Staphylococcus carnosus (strain TM300).